The sequence spans 884 residues: Protein translocase subunit SecA (884 aa).

ATP contacts are provided by residues Gln82, 100–104, and Asp491; that span reads GEGKT.

This sequence belongs to the SecA family.

Its subcellular location is the plastid. It is found in the chloroplast stroma. The protein localises to the chloroplast thylakoid membrane. The catalysed reaction is ATP + H2O + cellular proteinSide 1 = ADP + phosphate + cellular proteinSide 2.. In terms of biological role, has a central role in coupling the hydrolysis of ATP to the transfer of proteins across the thylakoid membrane. The sequence is that of Protein translocase subunit SecA from Olisthodiscus luteus (Marine phytoflagellate).